A 710-amino-acid chain; its full sequence is Protein CNGC15a (710 aa).

6 helical membrane-spanning segments follow: residues 85 to 105, 115 to 135, 174 to 194, 207 to 226, 248 to 268, and 368 to 388; these read IFLAACLISLFVDPLFFYLPV, SIGLEVSLTIIRTFVDAFYII, LWSDLVAALPLPQVLIWAVIP, VVRLVSIFQYLLRLYLIYPL, YLTLYMLASHVLGSTWYLLSI, and AEINFAVIVAILGLVLFALLI. 474-559 lines the a nucleoside 3',5'-cyclic phosphate pocket; that stretch reads LFDQMDDRML…WALDPRPTAV (86 aa).

It belongs to the cyclic nucleotide-gated cation channel (TC 1.A.1.5) family. In terms of assembly, interacts (via N-terminus) with DMI1 (via c-terminus). The Nod factor has no effect on this interaction, implying that the complex is maintained after activation. Expressed in roots, stems, leaves, flowers and pods.

It is found in the nucleus membrane. Cyclic nucleotide-gated channel involved in the establishment of both rhizobial and mycorrhizal associations. Required for full activation of nuclear-localized Ca(2+) oscillations by Nod and Myc factors. Simultaneous activation of the K(+)-permeable channel DMI1 and the Ca(2+) channel CNGC15 can give rise to sustained Ca(2+) oscillations. May function during fertilization in both female and male gametophytic Ca(2+) signaling. The sequence is that of Protein CNGC15a from Medicago truncatula (Barrel medic).